Reading from the N-terminus, the 492-residue chain is Adenosylhomocysteinase (492 aa).

Substrate-binding residues include Thr-68, Asp-153, and Glu-215. 216–218 (TTT) is an NAD(+) binding site. Residues Lys-245 and Asp-249 each contribute to the substrate site. Residues Asn-250, 279 to 284 (GYGDVG), Glu-302, Asn-337, 358 to 360 (IGH), and Asn-406 contribute to the NAD(+) site.

It belongs to the adenosylhomocysteinase family. NAD(+) serves as cofactor.

It localises to the cytoplasm. The enzyme catalyses S-adenosyl-L-homocysteine + H2O = L-homocysteine + adenosine. Its pathway is amino-acid biosynthesis; L-homocysteine biosynthesis; L-homocysteine from S-adenosyl-L-homocysteine: step 1/1. Its function is as follows. May play a key role in the regulation of the intracellular concentration of adenosylhomocysteine. The chain is Adenosylhomocysteinase from Mycobacterium leprae (strain Br4923).